Here is a 153-residue protein sequence, read N- to C-terminus: Large ribosomal subunit protein uL13 (153 aa).

The segment at 128-153 (SEHPHEAQSPEVLDVTSMNSKNTRSA) is disordered. Over residues 143-153 (TSMNSKNTRSA) the composition is skewed to polar residues.

The protein belongs to the universal ribosomal protein uL13 family. As to quaternary structure, part of the 50S ribosomal subunit.

Functionally, this protein is one of the early assembly proteins of the 50S ribosomal subunit, although it is not seen to bind rRNA by itself. It is important during the early stages of 50S assembly. The polypeptide is Large ribosomal subunit protein uL13 (Roseobacter denitrificans (strain ATCC 33942 / OCh 114) (Erythrobacter sp. (strain OCh 114))).